We begin with the raw amino-acid sequence, 47 residues long: Photosystem II reaction center protein K (47 aa).

A propeptide spanning residues Met1–Ala10 is cleaved from the precursor. The helical transmembrane segment at Leu26–Phe46 threads the bilayer.

This sequence belongs to the PsbK family. In terms of assembly, PSII is composed of 1 copy each of membrane proteins PsbA, PsbB, PsbC, PsbD, PsbE, PsbF, PsbH, PsbI, PsbJ, PsbK, PsbL, PsbM, PsbT, PsbX, PsbY, Psb30/Ycf12, peripheral proteins PsbO, CyanoQ (PsbQ), PsbU, PsbV and a large number of cofactors. It forms dimeric complexes.

It localises to the cellular thylakoid membrane. One of the components of the core complex of photosystem II (PSII). PSII is a light-driven water:plastoquinone oxidoreductase that uses light energy to abstract electrons from H(2)O, generating O(2) and a proton gradient subsequently used for ATP formation. It consists of a core antenna complex that captures photons, and an electron transfer chain that converts photonic excitation into a charge separation. The polypeptide is Photosystem II reaction center protein K (Prochlorococcus marinus (strain NATL1A)).